Here is a 466-residue protein sequence, read N- to C-terminus: Glutamate decarboxylase (466 aa).

At K277 the chain carries N6-(pyridoxal phosphate)lysine.

Belongs to the group II decarboxylase family. The cofactor is pyridoxal 5'-phosphate.

The catalysed reaction is L-glutamate + H(+) = 4-aminobutanoate + CO2. Functionally, converts internalized glutamate to GABA and increases the internal pH. Involved in glutamate-dependent acid resistance. This is Glutamate decarboxylase (gadB) from Lactococcus lactis subsp. cremoris (strain MG1363).